Reading from the N-terminus, the 215-residue chain is 3-isopropylmalate dehydratase small subunit (215 aa).

It belongs to the LeuD family. LeuD type 1 subfamily. In terms of assembly, heterodimer of LeuC and LeuD.

The enzyme catalyses (2R,3S)-3-isopropylmalate = (2S)-2-isopropylmalate. Its pathway is amino-acid biosynthesis; L-leucine biosynthesis; L-leucine from 3-methyl-2-oxobutanoate: step 2/4. Its function is as follows. Catalyzes the isomerization between 2-isopropylmalate and 3-isopropylmalate, via the formation of 2-isopropylmaleate. This chain is 3-isopropylmalate dehydratase small subunit, found in Polynucleobacter asymbioticus (strain DSM 18221 / CIP 109841 / QLW-P1DMWA-1) (Polynucleobacter necessarius subsp. asymbioticus).